A 241-amino-acid polypeptide reads, in one-letter code: Transcription initiation factor TFIID subunit 14 (241 aa).

The region spanning 1-137 (MTTVKRTVRL…PGLLKALTAT (137 aa)) is the YEATS domain. The segment at 141–169 (PGYSDEGEEARKDKRKNESEVGAGKKKAK) is disordered. Over residues 149–159 (EARKDKRKNES) the composition is skewed to basic and acidic residues.

The protein belongs to the TAF14 family. Component of the fcp1/TFIIF/polII complex via interaction of tfg3 with both tfg1/TFIIF-alpha and tfg2/TFIIF-beta subunits. Component of the SWI/SNF global transcription activator complex composed of at least arp9, arp42, snf5, snf22, snf30, sbf59, sol1, ssr1, ssr2, ssr3, ssr4 and tfg3. Also interacts with the TATA-binding protein (TBP). Component of the mst2 complex composed of at least eaf6, mst2, nto1, pdp3, ptf1, ptf2 and tfg3.

The protein resides in the nucleus. The protein localises to the nucleoplasm. Its function is as follows. Functions as a component of the DNA-binding general transcription factor complex TFIID, and the RNA polymerase II associated general transcription factor complex TFIIF. Binding of TFIID to a promoter (with or without TATA element) is the initial step in preinitiation complex (PIC) formation. TFIID plays a key role in the regulation of gene expression by RNA polymerase II through different activities such as transcription activator interaction, core promoter recognition and selectivity, TFIIA and TFIIB interaction, facilitation of DNA opening and initiation of transcription. TFIIF is essential for the initiation of transcription by RNA polymerase II. TFIIF functions include the recruitment of RNA polymerase II to the promoter bound DNA-TBP-TFIIB complex, decreasing the affinity of RNA polymerase II for non-specific DNA, allowing for the subsequent recruitment of TFIIE and TFIIH, and facilitating RNA polymerase II elongation. The TAF14 subunit has stimulatory activity. Component of the SWI/SNF complex, an ATP-dependent chromatin remodeling complex, required for the positive and negative regulation of gene expression of a large number of genes. It changes chromatin structure by altering DNA-histone contacts within a nucleosome, leading eventually to a change in nucleosome position, thus facilitating or repressing binding of gene-specific transcription factors. Component of the mst2 complex which is a highly specific H3 lysine 14 (H3K14) acetyltransferase that functions together with gcn5 to regulate global levels of H3K14 acetylation (H3K14ac), critical for DNA damage checkpoint activation. This Schizosaccharomyces pombe (strain 972 / ATCC 24843) (Fission yeast) protein is Transcription initiation factor TFIID subunit 14 (tfg3).